We begin with the raw amino-acid sequence, 308 residues long: Cysteine proteinase 3 (308 aa).

Positions 1-13 (MFALILFVSLACA) are cleaved as a signal peptide. Positions 14 to 92 (NEVAFKQWAA…TSNVKAAVKA (79 aa)) are cleaved as a propeptide — activation peptide. Cystine bridges form between cysteine 112-cysteine 153 and cysteine 146-cysteine 186. The active site involves cysteine 115. Active-site residues include histidine 251 and asparagine 271.

This sequence belongs to the peptidase C1 family.

It localises to the cytoplasm. It is found in the cytoplasmic vesicle. The protein localises to the phagosome. It catalyses the reaction Hydrolysis of proteins, including basement membrane collagen and azocasein. Preferential cleavage: Arg-Arg-|-Xaa in small molecule substrates including Z-Arg-Arg-|-NHMec.. Cysteine protease which may be involved in pathogenicity. The sequence is that of Cysteine proteinase 3 from Entamoeba histolytica (strain ATCC 30459 / HM-1:IMSS / ABRM).